Reading from the N-terminus, the 1096-residue chain is Centrosome-associated zinc finger protein Cp190 (1096 aa).

Positions 1-209 (MGEVKSVKVD…GDSSNVKQEP (209 aa)) are involved in microtubule and centrosome binding. Residues 30–97 (CDLTLQFRDN…MYTGTLEFEL (68 aa)) enclose the BTB domain. Residues 126–308 (MENVNRQQRP…PQGTQTQLEH (183 aa)) are disordered. Composition is skewed to polar residues over residues 175–213 (RANT…TSPF) and 220–230 (YNNNKRPAQTS). Residues S197 and S211 each carry the phosphoserine modification. A nuclear localization region spans residues 207–271 (QEPTSPFEQL…GDNDPEYDGG (65 aa)). Residues 210–245 (TSPFEQLRKGYNNNKRPAQTSLLSPPSKKPSLEEVK) are involved in interaction with cliff. Residue T229 is modified to Phosphothreonine. S233 is subject to Phosphoserine. Residues 239-252 (PSLEEVKEFAEQQR) are compositionally biased toward basic and acidic residues. The interval 245–468 (KEFAEQQRMR…IAQGAENTTG (224 aa)) is centrosomal targeting M domain involved in interaction with ZIPIC. Residues 292-305 (STSKQQSPQGTQTQ) are compositionally biased toward low complexity. Phosphoserine is present on residues S298 and S319. An involved in interaction with cliff region spans residues 309–390 (GSTTIILKQD…KPPANQSSAT (82 aa)). The tract at residues 366-449 (NTPAAPTEKS…ANTAAAQKRR (84 aa)) is disordered. Residues 385-508 (NQSSATTSPH…KETIDPALCE (124 aa)) form a centrosomal localization and interaction with microtubules region. Over residues 412-445 (AQQKAASSQQKSGTSQTTGNQGTGANPPANTAAA) the composition is skewed to low complexity. C2H2-type zinc fingers lie at residues 538–561 (AECA…NEVH) and 567–590 (QQCI…KSYH). A Phosphothreonine modification is found at T603. The span at 608–625 (LGSQDEEEEAEGDEEQEP) shows a compositional bias: acidic residues. Residues 608 to 630 (LGSQDEEEEAEGDEEQEPEQTGK) form a disordered region. A phosphoserine mark is found at S610, S708, and S723. The segment at 710–733 (PEAEHVKQETDEKSLAGTEEEYDD) is disordered. Residues 711-723 (EAEHVKQETDEKS) are compositionally biased toward basic and acidic residues. T727 is subject to Phosphothreonine. Phosphoserine occurs at positions 745, 748, 757, and 760. Residues 770 to 927 (LIAESEEQSN…EDSPIPHSDS (158 aa)) form a disordered region. A compositionally biased stretch (basic and acidic residues) spans 777–799 (QSNKEPKSDKPRDDISEKLKELT). Positions 802–812 (WTEDENDDDVD) are enriched in acidic residues. Position 817 is a phosphothreonine (T817). Composition is skewed to basic and acidic residues over residues 825 to 834 (ANKDPEPTVH), 849 to 861 (KGPE…KASE), 882 to 907 (EKMD…KEAE), and 914 to 927 (EFIK…HSDS). Phosphoserine is present on residues S920, S925, and S927. A Phosphothreonine modification is found at T936. At S938 the chain carries Phosphoserine. Composition is skewed to basic and acidic residues over residues 960 to 973 (IAEA…KDIV) and 1011 to 1035 (AAEK…EDKP). Positions 960-1096 (IAEAEKPDQE…GVSAAAKEEL (137 aa)) are disordered. Phosphoserine occurs at positions 1071 and 1074. The segment covering 1076 to 1086 (WGDDDEDEDEN) has biased composition (acidic residues).

As to quaternary structure, homodimerizes via the N-terminal BTB domain. Component of the gypsy chromatin insulator complex, composed of Cp190, mod(mdg4) and su(Hw). The gypsy chromatin insulator complex interacts with Topors via mod(mdg4) and su(Hw). Interacts with Cp60. Interacts with inv. Interacts with Nup98. Interacts (via BTB domain) with pita (via region between the ZAD domain and the first zinc finger domain); the interaction is direct. Interacts with ZIPIC (via region between the ZAD domain and the first zinc finger domain); the interaction is direct. Interacts (via regions between the BTB domain and first zinc finger domain) with cliff (via regions flanking MADF domain 1); the interaction is probably direct. Associates (via N-terminus) with microtubules; the interaction is direct, is enhanced by dimerization and involves multiple regions within the N-terminus. Microtubule association is enriched at growing plus ends. As to expression, expressed in spermatids but not in mature spermatozoa. Localizes within the spermatids to a sheath of microtubules around the nucleus and to microtubules within the tail.

The protein resides in the nucleus. It is found in the cytoplasm. Its subcellular location is the cytoskeleton. The protein localises to the microtubule organizing center. It localises to the centrosome. The protein resides in the chromosome. It is found in the nucleoplasm. Plays a central role in chromatin domain organization and boundary function through recruitment by a range of insulator DNA-binding proteins, including ZIPIC, pita, CTCF, su(Hw), cliff and others. Together with pita and CTCF cooperatively binds to and regulates the activity of the Miscadastral pigmentation (MCP) insulator. Cooperatively recruited to the front-ultraabdominal (Fub) boundary by pita, su(Hw) and cliff. Recruitment of Cp190 together with Chro/chromator induces chromatin decondensation. Component of the gypsy chromatin insulator complex which is required for the function of the gypsy chromatin insulator and other endogenous chromatin insulators. Chromatin insulators are regulatory elements that establish independent domains of transcriptional activity within eukaryotic genomes. Insulators have two defining properties; they can block the communication between an enhancer and a promoter when placed between them and can also buffer transgenes from position effect variegation (PEV). Insulators are proposed to structure the chromatin fiber into independent domains of differing transcriptional potential by promoting the formation of distinct chromatin loops to form topologically associating domains (TADs). This chromatin looping may involve the formation of insulator bodies, where homotypic interactions between individual subunits of the insulator complex could promote the clustering of widely spaced insulators at the nuclear periphery. Within the gypsy insulator complex, this protein may directly bind to insulator DNA at sites distinct from those recognized by su(Hw). Required during embryogenesis for axial expansion, an actin/myosin dependent process that distributes the dividing nuclei along the anterior-posterior axis of the syncytial embryo. Associates with centrosomes and interphase microtubules during mitosis, and recruits CP60; may have a role in maintaining centrosome and spindle integrity. This Drosophila melanogaster (Fruit fly) protein is Centrosome-associated zinc finger protein Cp190.